The chain runs to 295 residues: NAD kinase (295 aa).

Aspartate 72 serves as the catalytic Proton acceptor. NAD(+) contacts are provided by residues 72 to 73 (DG), 146 to 147 (ND), arginine 157, lysine 174, aspartate 176, 187 to 192 (TAYALS), and glutamine 247.

Belongs to the NAD kinase family. A divalent metal cation is required as a cofactor.

Its subcellular location is the cytoplasm. The catalysed reaction is NAD(+) + ATP = ADP + NADP(+) + H(+). In terms of biological role, involved in the regulation of the intracellular balance of NAD and NADP, and is a key enzyme in the biosynthesis of NADP. Catalyzes specifically the phosphorylation on 2'-hydroxyl of the adenosine moiety of NAD to yield NADP. The protein is NAD kinase of Ectopseudomonas mendocina (strain ymp) (Pseudomonas mendocina).